The chain runs to 472 residues: PEP-dependent dihydroxyacetone kinase, phosphoryl donor subunit DhaM (472 aa).

The PTS EIIA type-4 domain maps to 1-135 (MVNLVIVSHS…NALEAKRVQL (135 aa)). His9 functions as the Tele-phosphohistidine intermediate in the catalytic mechanism. One can recognise an HPr domain in the interval 156 to 243 (ARSVSVVIQN…ALAAENFGEP (88 aa)). His170 (pros-phosphohistidine intermediate) is an active-site residue. The PTS EI-like, N-terminal part stretch occupies residues 266–472 (PQPQDRISRE…DIPGKRVIRG (207 aa)). The active-site Tele-phosphohistidine intermediate is the His432.

The protein belongs to the PEP-utilizing enzyme family. Homodimer. The dihydroxyacetone kinase complex is composed of a homodimer of DhaM, a homodimer of DhaK and the subunit DhaL.

It carries out the reaction dihydroxyacetone + phosphoenolpyruvate = dihydroxyacetone phosphate + pyruvate. Functionally, component of the dihydroxyacetone kinase complex, which is responsible for the phosphoenolpyruvate (PEP)-dependent phosphorylation of dihydroxyacetone. DhaM serves as the phosphoryl donor. Is phosphorylated by phosphoenolpyruvate in an EI- and HPr-dependent reaction, and a phosphorelay system on histidine residues finally leads to phosphoryl transfer to DhaL and dihydroxyacetone. This is PEP-dependent dihydroxyacetone kinase, phosphoryl donor subunit DhaM from Klebsiella michiganensis (strain ATCC 8724 / DSM 4798 / JCM 20051 / NBRC 3318 / NRRL B-199 / KCTC 1686 / BUCSAV 143 / CCM 1901).